A 492-amino-acid polypeptide reads, in one-letter code: Probable malate:quinone oxidoreductase 1 (492 aa).

This sequence belongs to the MQO family. FAD serves as cofactor.

The enzyme catalyses (S)-malate + a quinone = a quinol + oxaloacetate. It participates in carbohydrate metabolism; tricarboxylic acid cycle; oxaloacetate from (S)-malate (quinone route): step 1/1. This Staphylococcus epidermidis (strain ATCC 12228 / FDA PCI 1200) protein is Probable malate:quinone oxidoreductase 1.